Consider the following 155-residue polypeptide: NADPH-dependent 7-cyano-7-deazaguanine reductase (155 aa).

The Thioimide intermediate role is filled by Cys53. The active-site Proton donor is Asp60. Substrate is bound by residues 75–77 and 94–95; these read VES and HE.

It belongs to the GTP cyclohydrolase I family. QueF type 1 subfamily.

It is found in the cytoplasm. It carries out the reaction 7-aminomethyl-7-carbaguanine + 2 NADP(+) = 7-cyano-7-deazaguanine + 2 NADPH + 3 H(+). The protein operates within tRNA modification; tRNA-queuosine biosynthesis. Its function is as follows. Catalyzes the NADPH-dependent reduction of 7-cyano-7-deazaguanine (preQ0) to 7-aminomethyl-7-deazaguanine (preQ1). This Brucella anthropi (strain ATCC 49188 / DSM 6882 / CCUG 24695 / JCM 21032 / LMG 3331 / NBRC 15819 / NCTC 12168 / Alc 37) (Ochrobactrum anthropi) protein is NADPH-dependent 7-cyano-7-deazaguanine reductase.